A 320-amino-acid polypeptide reads, in one-letter code: Putative FBD-associated F-box protein At3g60710 (320 aa).

Residues 2 to 48 form the F-box domain; it reads EDLISQLPNELLQEILLNLPTSESVRTSVLPTRWRNLWQSVPGLYLI. An FBD domain is found at 212 to 268; it reads MEEIASSPVPKCLQTSIENVKIKMTPKADQEKSRKAETEVANYILENATLLKLTLWL.

The sequence is that of Putative FBD-associated F-box protein At3g60710 from Arabidopsis thaliana (Mouse-ear cress).